The chain runs to 172 residues: Protein GrpE (172 aa).

Residues 1 to 23 (MNQDHPECDSEELTQNSPETDPL) are disordered.

It belongs to the GrpE family. In terms of assembly, homodimer.

It localises to the cytoplasm. Its function is as follows. Participates actively in the response to hyperosmotic and heat shock by preventing the aggregation of stress-denatured proteins, in association with DnaK and GrpE. It is the nucleotide exchange factor for DnaK and may function as a thermosensor. Unfolded proteins bind initially to DnaJ; upon interaction with the DnaJ-bound protein, DnaK hydrolyzes its bound ATP, resulting in the formation of a stable complex. GrpE releases ADP from DnaK; ATP binding to DnaK triggers the release of the substrate protein, thus completing the reaction cycle. Several rounds of ATP-dependent interactions between DnaJ, DnaK and GrpE are required for fully efficient folding. The sequence is that of Protein GrpE from Xylella fastidiosa (strain M23).